The following is a 342-amino-acid chain: S-adenosylmethionine:tRNA ribosyltransferase-isomerase (342 aa).

This sequence belongs to the QueA family. In terms of assembly, monomer.

It localises to the cytoplasm. It catalyses the reaction 7-aminomethyl-7-carbaguanosine(34) in tRNA + S-adenosyl-L-methionine = epoxyqueuosine(34) in tRNA + adenine + L-methionine + 2 H(+). The protein operates within tRNA modification; tRNA-queuosine biosynthesis. Its function is as follows. Transfers and isomerizes the ribose moiety from AdoMet to the 7-aminomethyl group of 7-deazaguanine (preQ1-tRNA) to give epoxyqueuosine (oQ-tRNA). The protein is S-adenosylmethionine:tRNA ribosyltransferase-isomerase of Oceanobacillus iheyensis (strain DSM 14371 / CIP 107618 / JCM 11309 / KCTC 3954 / HTE831).